Reading from the N-terminus, the 545-residue chain is CTP synthase (545 aa).

An amidoligase domain region spans residues 1-266 (MTHFIFVTGG…DDLICERFGY (266 aa)). Position 13 (serine 13) interacts with CTP. Serine 13 is a UTP binding site. ATP is bound by residues 14–19 (SLGKGI) and aspartate 71. Residues aspartate 71 and glutamate 140 each coordinate Mg(2+). Residues 147–149 (DIE), 187–192 (KTKPTQ), and lysine 223 each bind CTP. UTP-binding positions include 187-192 (KTKPTQ) and lysine 223. 239–241 (KDA) lines the ATP pocket. The Glutamine amidotransferase type-1 domain maps to 292-543 (RVAMVGKYVE…IDAAKKQHLK (252 aa)). An L-glutamine-binding site is contributed by glycine 353. Catalysis depends on cysteine 380, which acts as the Nucleophile; for glutamine hydrolysis. Residues 381–384 (LGMQ), glutamate 404, and arginine 471 contribute to the L-glutamine site. Residues histidine 516 and glutamate 518 contribute to the active site.

This sequence belongs to the CTP synthase family. Homotetramer.

It carries out the reaction UTP + L-glutamine + ATP + H2O = CTP + L-glutamate + ADP + phosphate + 2 H(+). The enzyme catalyses L-glutamine + H2O = L-glutamate + NH4(+). The catalysed reaction is UTP + NH4(+) + ATP = CTP + ADP + phosphate + 2 H(+). Its pathway is pyrimidine metabolism; CTP biosynthesis via de novo pathway; CTP from UDP: step 2/2. With respect to regulation, allosterically activated by GTP, when glutamine is the substrate; GTP has no effect on the reaction when ammonia is the substrate. The allosteric effector GTP functions by stabilizing the protein conformation that binds the tetrahedral intermediate(s) formed during glutamine hydrolysis. Inhibited by the product CTP, via allosteric rather than competitive inhibition. Its function is as follows. Catalyzes the ATP-dependent amination of UTP to CTP with either L-glutamine or ammonia as the source of nitrogen. Regulates intracellular CTP levels through interactions with the four ribonucleotide triphosphates. The chain is CTP synthase from Acinetobacter baylyi (strain ATCC 33305 / BD413 / ADP1).